The primary structure comprises 298 residues: MQDFSSLLLKLQEYWKNQGCLVIQPYDIPAGAGTFHPATLLRSLDKKPWNVAYVAPSRRPTDGRYGENPNRLGSYYQFQVVIKPSPSNIQELYLKSLEVLGINLKEHDIRFVEDNWESPTLGAWGLGWEVWLDGMEVTQFTYFQQVGGIACNPIPVEITYGLERLAMYVQKVENILEIEWAKKNHDSVNYAQVHLESEYEFSKYHFEIASVKRLLEMFKNAQAEALHCLENKLPLPAYDFVMLCSHFFNILDARKAISVAERQNYILQIRDLTKGCAILYKEQEEEREERLKNALTKA.

The protein belongs to the class-II aminoacyl-tRNA synthetase family. As to quaternary structure, tetramer of two alpha and two beta subunits.

It is found in the cytoplasm. The catalysed reaction is tRNA(Gly) + glycine + ATP = glycyl-tRNA(Gly) + AMP + diphosphate. The protein is Glycine--tRNA ligase alpha subunit of Helicobacter pylori (strain Shi470).